The chain runs to 141 residues: Transcription antitermination protein NusB (141 aa).

The protein belongs to the NusB family.

Its function is as follows. Involved in transcription antitermination. Required for transcription of ribosomal RNA (rRNA) genes. Binds specifically to the boxA antiterminator sequence of the ribosomal RNA (rrn) operons. This is Transcription antitermination protein NusB from Treponema pallidum (strain Nichols).